The following is a 540-amino-acid chain: CUB domain-containing protein 2 (540 aa).

Residues 1–22 form the signal peptide; that stretch reads MLAEWGACLLLAVALLGPGLQA. Residues 23–516 lie on the Extracellular side of the membrane; the sequence is QAMEGVKCGG…VSMVAQDTSD (494 aa). Disulfide bonds link Cys-30–Cys-56, Cys-83–Cys-106, Cys-145–Cys-171, Cys-198–Cys-218, Cys-257–Cys-283, and Cys-314–Cys-336. 3 consecutive CUB domains span residues 30-143, 145-255, and 257-373; these read CGGV…YQKD, CGGV…YFSG, and CQEV…YIGV. N-linked (GlcNAc...) asparagine glycosylation is present at Asn-40. Asn-267 carries an N-linked (GlcNAc...) asparagine glycan. Residues Asn-377, Asn-435, and Asn-436 are each glycosylated (N-linked (GlcNAc...) asparagine). The chain crosses the membrane as a helical span at residues 517–537; it reads IVFLGLCILAGILMVIAIVVL. The Cytoplasmic segment spans residues 538-540; that stretch reads MLL.

The protein resides in the membrane. The sequence is that of CUB domain-containing protein 2 (CDCP2) from Homo sapiens (Human).